A 376-amino-acid polypeptide reads, in one-letter code: 1-deoxy-D-xylulose 5-phosphate reductoisomerase (376 aa).

The NADPH site is built by threonine 12, glycine 13, serine 14, isoleucine 15, arginine 39, glutamine 40, and asparagine 110. Lysine 111 serves as a coordination point for 1-deoxy-D-xylulose 5-phosphate. Glutamate 112 contributes to the NADPH binding site. Aspartate 136 lines the Mn(2+) pocket. Positions 137, 138, 162, and 185 each coordinate 1-deoxy-D-xylulose 5-phosphate. Glutamate 138 provides a ligand contact to Mn(2+). Residue glycine 191 coordinates NADPH. Residues serine 198, asparagine 203, lysine 204, and glutamate 207 each coordinate 1-deoxy-D-xylulose 5-phosphate. Position 207 (glutamate 207) interacts with Mn(2+).

Belongs to the DXR family. It depends on Mg(2+) as a cofactor. Mn(2+) is required as a cofactor.

The catalysed reaction is 2-C-methyl-D-erythritol 4-phosphate + NADP(+) = 1-deoxy-D-xylulose 5-phosphate + NADPH + H(+). It participates in isoprenoid biosynthesis; isopentenyl diphosphate biosynthesis via DXP pathway; isopentenyl diphosphate from 1-deoxy-D-xylulose 5-phosphate: step 1/6. Catalyzes the NADPH-dependent rearrangement and reduction of 1-deoxy-D-xylulose-5-phosphate (DXP) to 2-C-methyl-D-erythritol 4-phosphate (MEP). The sequence is that of 1-deoxy-D-xylulose 5-phosphate reductoisomerase from Treponema pallidum (strain Nichols).